A 315-amino-acid polypeptide reads, in one-letter code: Long form salivary protein D7L2 (315 aa).

The N-terminal stretch at methionine 1 to alanine 18 is a signal peptide. 4 cysteine pairs are disulfide-bonded: cysteine 37–cysteine 73, cysteine 69–cysteine 128, cysteine 178–cysteine 211, and cysteine 252–cysteine 263.

It belongs to the PBP/GOBP family. In terms of assembly, interacts with host coagulation factor XII/F12 (inactive and activated). Interacts with host coagulation factor XI/F11 (inactive).

The protein resides in the secreted. In terms of biological role, modulates blood feeding of female mosquitoes on vertebrate species by binding and sequestering different mediators involved in the host response. Binds leukotriene B4 and leukotriene D4. Exhibits anticoagulant activity targeting the intrinsic coagulation pathway; binds coagulation factors XII and XI, preventing generation of activated FXIIa and FXIa. The chain is Long form salivary protein D7L2 from Anopheles gambiae (African malaria mosquito).